A 768-amino-acid polypeptide reads, in one-letter code: Pentatricopeptide repeat-containing protein At4g01030, mitochondrial (768 aa).

Residues 1-25 (MYRFLGLTIHGGLIKRGLDNSDTRV) constitute a mitochondrion transit peptide. PPR repeat units follow at residues 22-52 (DTRVVSASMGFYGRCVSLGFANKLFDEMPKR), 53-87 (DDLAWNEIVMVNLRSGNWEKAVELFREMQFSGAKA), 88-122 (YDSTMVKLLQVCSNKEGFAEGRQIHGYVLRLGLES), 123-153 (NVSMCNSLIVMYSRNGKLELSRKVFNSMKDR), 154-188 (NLSSWNSILSSYTKLGYVDDAIGLLDEMEICGLKP), 189-223 (DIVTWNSLLSGYASKGLSKDAIAVLKRMQIAGLKP), 224-254 (STSSISSLLQAVAEPGHLKLGKAIHGYILRN), 259-289 (DVYVETTLIDMYIKTGYLPYARMVFDMMDAK), 290-324 (NIVAWNSLVSGLSYACLLKDAEALMIRMEKEGIKP), 325-359 (DAITWNSLASGYATLGKPEKALDVIGKMKEKGVAP), 360-394 (NVVSWTAIFSGCSKNGNFRNALKVFIKMQEEGVGP), 395-429 (NAATMSTLLKILGCLSLLHSGKEVHGFCLRKNLIC), 430-460 (DAYVATALVDMYGKSGDLQSAIEIFWGIKNK), 461-495 (SLASWNCMLMGYAMFGRGEEGIAAFSVMLEAGMEP), 496-526 (DAITFTSVLSVCKNSGLVQEGWKYFDLMRSR), and 532-562 (TIEHCSCMVDLLGRSGYLDEAWDFIQTMSLK). The interval 567–642 (IWGAFLSSCK…QDLWSWIQID (76 aa)) is type E motif. Residues 643-673 (QTVHIFYAEGKTHPDEGDIYFELYKLVSEMK) form a type E(+) motif region. The interval 674-768 (KSGYVPDTSC…DGKCSCNDSW (95 aa)) is type DYW motif.

This sequence belongs to the PPR family. PCMP-H subfamily.

The protein localises to the mitochondrion. This Arabidopsis thaliana (Mouse-ear cress) protein is Pentatricopeptide repeat-containing protein At4g01030, mitochondrial (PCMP-H65).